Reading from the N-terminus, the 381-residue chain is Homoserine O-succinyltransferase (381 aa).

One can recognise an AB hydrolase-1 domain in the interval 45–360; it reads NAVLVCHALN…PHGHDAFLLD (316 aa). S151 functions as the Nucleophile in the catalytic mechanism. R221 is a binding site for substrate. Residues D321 and H354 contribute to the active site. D355 lines the substrate pocket.

Belongs to the AB hydrolase superfamily. MetX family. As to quaternary structure, homodimer.

The protein resides in the cytoplasm. It catalyses the reaction L-homoserine + succinyl-CoA = O-succinyl-L-homoserine + CoA. It participates in amino-acid biosynthesis; L-methionine biosynthesis via de novo pathway; O-succinyl-L-homoserine from L-homoserine: step 1/1. Transfers a succinyl group from succinyl-CoA to L-homoserine, forming succinyl-L-homoserine. The chain is Homoserine O-succinyltransferase from Paraburkholderia xenovorans (strain LB400).